The following is a 372-amino-acid chain: Queuine tRNA-ribosyltransferase (372 aa).

The Proton acceptor role is filled by aspartate 89. Residues 89–93 (DSGGF), aspartate 143, glutamine 185, and glycine 212 contribute to the substrate site. Residues 243–249 (GVGKPED) are RNA binding. Aspartate 262 (nucleophile) is an active-site residue. The interval 267–271 (TRNAR) is RNA binding; important for wobble base 34 recognition. The Zn(2+) site is built by cysteine 300, cysteine 302, cysteine 305, and histidine 331.

It belongs to the queuine tRNA-ribosyltransferase family. Homodimer. Within each dimer, one monomer is responsible for RNA recognition and catalysis, while the other monomer binds to the replacement base PreQ1. It depends on Zn(2+) as a cofactor.

It carries out the reaction 7-aminomethyl-7-carbaguanine + guanosine(34) in tRNA = 7-aminomethyl-7-carbaguanosine(34) in tRNA + guanine. It functions in the pathway tRNA modification; tRNA-queuosine biosynthesis. In terms of biological role, catalyzes the base-exchange of a guanine (G) residue with the queuine precursor 7-aminomethyl-7-deazaguanine (PreQ1) at position 34 (anticodon wobble position) in tRNAs with GU(N) anticodons (tRNA-Asp, -Asn, -His and -Tyr). Catalysis occurs through a double-displacement mechanism. The nucleophile active site attacks the C1' of nucleotide 34 to detach the guanine base from the RNA, forming a covalent enzyme-RNA intermediate. The proton acceptor active site deprotonates the incoming PreQ1, allowing a nucleophilic attack on the C1' of the ribose to form the product. After dissociation, two additional enzymatic reactions on the tRNA convert PreQ1 to queuine (Q), resulting in the hypermodified nucleoside queuosine (7-(((4,5-cis-dihydroxy-2-cyclopenten-1-yl)amino)methyl)-7-deazaguanosine). The protein is Queuine tRNA-ribosyltransferase of Pseudomonas aeruginosa (strain LESB58).